A 257-amino-acid chain; its full sequence is Probable dihydroorotate dehydrogenase B (NAD(+)), electron transfer subunit (257 aa).

Residues 2–89 (EKPVICRIKE…RGPYGTYFEP (88 aa)) form the FAD-binding FR-type domain. Positions 208, 213, 216, and 226 each coordinate [2Fe-2S] cluster.

The protein belongs to the PyrK family. As to quaternary structure, heterotetramer of 2 PyrK and 2 PyrD type B subunits. [2Fe-2S] cluster serves as cofactor. FAD is required as a cofactor.

It functions in the pathway pyrimidine metabolism; UMP biosynthesis via de novo pathway; orotate from (S)-dihydroorotate (NAD(+) route): step 1/1. Responsible for channeling the electrons from the oxidation of dihydroorotate from the FMN redox center in the PyrD type B subunit to the ultimate electron acceptor NAD(+). This chain is Probable dihydroorotate dehydrogenase B (NAD(+)), electron transfer subunit, found in Methanocaldococcus jannaschii (strain ATCC 43067 / DSM 2661 / JAL-1 / JCM 10045 / NBRC 100440) (Methanococcus jannaschii).